Consider the following 482-residue polypeptide: UDP-N-acetylmuramate--L-alanine ligase (482 aa).

ATP is bound at residue 119 to 125; that stretch reads GTHGKTT.

Belongs to the MurCDEF family.

It is found in the cytoplasm. The enzyme catalyses UDP-N-acetyl-alpha-D-muramate + L-alanine + ATP = UDP-N-acetyl-alpha-D-muramoyl-L-alanine + ADP + phosphate + H(+). It participates in cell wall biogenesis; peptidoglycan biosynthesis. Functionally, cell wall formation. The protein is UDP-N-acetylmuramate--L-alanine ligase of Cyanothece sp. (strain PCC 7425 / ATCC 29141).